The primary structure comprises 617 residues: Dihydroxy-acid dehydratase (617 aa).

A Mg(2+)-binding site is contributed by Asp81. Cys122 lines the [2Fe-2S] cluster pocket. Residues Asp123 and Lys124 each contribute to the Mg(2+) site. The residue at position 124 (Lys124) is an N6-carboxylysine. Cys195 is a binding site for [2Fe-2S] cluster. Mg(2+) is bound at residue Glu491. Residue Ser517 is the Proton acceptor of the active site.

It belongs to the IlvD/Edd family. Homodimer. It depends on [2Fe-2S] cluster as a cofactor. The cofactor is Mg(2+).

It carries out the reaction (2R)-2,3-dihydroxy-3-methylbutanoate = 3-methyl-2-oxobutanoate + H2O. The enzyme catalyses (2R,3R)-2,3-dihydroxy-3-methylpentanoate = (S)-3-methyl-2-oxopentanoate + H2O. The protein operates within amino-acid biosynthesis; L-isoleucine biosynthesis; L-isoleucine from 2-oxobutanoate: step 3/4. It functions in the pathway amino-acid biosynthesis; L-valine biosynthesis; L-valine from pyruvate: step 3/4. Functionally, functions in the biosynthesis of branched-chain amino acids. Catalyzes the dehydration of (2R,3R)-2,3-dihydroxy-3-methylpentanoate (2,3-dihydroxy-3-methylvalerate) into 2-oxo-3-methylpentanoate (2-oxo-3-methylvalerate) and of (2R)-2,3-dihydroxy-3-methylbutanoate (2,3-dihydroxyisovalerate) into 2-oxo-3-methylbutanoate (2-oxoisovalerate), the penultimate precursor to L-isoleucine and L-valine, respectively. This Nitrosococcus oceani (strain ATCC 19707 / BCRC 17464 / JCM 30415 / NCIMB 11848 / C-107) protein is Dihydroxy-acid dehydratase.